Reading from the N-terminus, the 498-residue chain is MPEEYLNAQKMEKLERIKSRGINPYPSTFHPSHTSAQAVALLVEIETQENHLKEVLKLAGRIMNRRDMGKISFMDIRDGSGKMQIFFRQNDLDEASIELLKDLDLGDFIGVEGSLMRTRTGEPSLAATKVSMLSKSLLPLPEKWHGLQDVEKRYRQRYLDLISNADARQTFLTRSRVISVIRAFMNAKGFLEVETPVLQPEAGGALARPFITHHQALNCDFYMRIALELHLKRLIVGGFDRVYEIGRIFRNEGISTRHNPEFTMMESYQAYANYKDVMDFLEEMVSSVVKEISGGYTLPFGDITLDFTPPWPRLTMRDAVKQYAGIDFFDFPTKETLAAEMTRRKLKVDPAKDWGKLVDELVGEFVEPHLVQPTFLTDHPVAMSPLAKQKPEDPRLTERFEAICANMEIANAFSELNDPVEQRARFKEQLEKRSQLRTDESESVDEDFLAALAYGMPPTGGLGVGIDRLVMLFTNHDSIREVILFPALKDREDTKTQE.

2 residues coordinate Mg(2+): glutamate 401 and glutamate 408.

The protein belongs to the class-II aminoacyl-tRNA synthetase family. Homodimer. It depends on Mg(2+) as a cofactor.

Its subcellular location is the cytoplasm. It catalyses the reaction tRNA(Lys) + L-lysine + ATP = L-lysyl-tRNA(Lys) + AMP + diphosphate. The chain is Lysine--tRNA ligase from Dehalococcoides mccartyi (strain CBDB1).